Here is a 206-residue protein sequence, read N- to C-terminus: dTTP/UTP pyrophosphatase (206 aa).

D79 acts as the Proton acceptor in catalysis.

The protein belongs to the Maf family. YhdE subfamily. A divalent metal cation serves as cofactor.

Its subcellular location is the cytoplasm. It catalyses the reaction dTTP + H2O = dTMP + diphosphate + H(+). The enzyme catalyses UTP + H2O = UMP + diphosphate + H(+). Nucleoside triphosphate pyrophosphatase that hydrolyzes dTTP and UTP. May have a dual role in cell division arrest and in preventing the incorporation of modified nucleotides into cellular nucleic acids. In Rhizobium etli (strain ATCC 51251 / DSM 11541 / JCM 21823 / NBRC 15573 / CFN 42), this protein is dTTP/UTP pyrophosphatase.